A 230-amino-acid chain; its full sequence is 2,3-bisphosphoglycerate-dependent phosphoglycerate mutase 2 (230 aa).

Residues 8–15 (RHGQSEWN), 21–22 (TG), R60, 87–90 (ERHY), K98, 114–115 (RR), and 183–184 (GN) contribute to the substrate site. H9 (tele-phosphohistidine intermediate) is an active-site residue. Catalysis depends on E87, which acts as the Proton donor/acceptor.

This sequence belongs to the phosphoglycerate mutase family. BPG-dependent PGAM subfamily.

It catalyses the reaction (2R)-2-phosphoglycerate = (2R)-3-phosphoglycerate. Its pathway is carbohydrate degradation; glycolysis; pyruvate from D-glyceraldehyde 3-phosphate: step 3/5. In terms of biological role, catalyzes the interconversion of 2-phosphoglycerate and 3-phosphoglycerate. This is 2,3-bisphosphoglycerate-dependent phosphoglycerate mutase 2 from Lactiplantibacillus plantarum (strain ATCC BAA-793 / NCIMB 8826 / WCFS1) (Lactobacillus plantarum).